The sequence spans 358 residues: DnaJ homolog subfamily C member 18 (358 aa).

The J domain maps to 82–146 (NYYEILGVSR…DKRLRYDEYG (65 aa)). A helical transmembrane segment spans residues 228 to 248 (AFIQLLPVLVIVIISVITQLL).

It is found in the endoplasmic reticulum membrane. In Macaca fascicularis (Crab-eating macaque), this protein is DnaJ homolog subfamily C member 18 (DNAJC18).